A 395-amino-acid polypeptide reads, in one-letter code: uncharacterized protein (395 aa).

2 disordered regions span residues 17 to 155 and 276 to 304; these read EVKK…QVKT and EEREKSAIKQNKEQSSEGSKTANQTHEQK. Polar residues-rich tracts occupy residues 42 to 71 and 81 to 96; these read DGNNQVNEPTGNDNTQVVENTEDISASNVV and GDASTQSPETSENVVK. Basic and acidic residues predominate over residues 103–133; the sequence is VAEKPEKEDLAVIESEDKAAKPDGEIKKNVE. Residues 134-143 are compositionally biased toward low complexity; that stretch reads TEVTSRSTSS. 2 stretches are compositionally biased toward basic and acidic residues: residues 144-155 and 276-290; these read QEKDELEKQVKT and EEREKSAIKQNKEQS. Positions 224–351 form a coiled coil; the sequence is LKMNGKEDDL…QRRLKELEAM (128 aa). The span at 291-300 shows a compositional bias: polar residues; the sequence is SEGSKTANQT.

The protein localises to the cytoplasm. This is an uncharacterized protein from Schizosaccharomyces pombe (strain 972 / ATCC 24843) (Fission yeast).